The primary structure comprises 475 residues: Chromosomal replication initiator protein DnaA (475 aa).

The tract at residues 1 to 73 (MSDTEQERWS…LSCWQAELPD (73 aa)) is domain I, interacts with DnaA modulators. A domain II region spans residues 73–131 (DVHRIDLTVRSAMRCAAPVREAPATDARHPERSEGRNGVELKTVATAPASANHDALGGS). Positions 132–354 (PLDPRLTFQS…GAINRLLAHS (223 aa)) are domain III, AAA+ region. ATP contacts are provided by G179, G181, K182, and T183. Residues 355 to 475 (KLNAQPVTLE…VELLKRQLQE (121 aa)) are domain IV, binds dsDNA.

The protein belongs to the DnaA family. In terms of assembly, oligomerizes as a right-handed, spiral filament on DNA at oriC.

The protein localises to the cytoplasm. Plays an essential role in the initiation and regulation of chromosomal replication. ATP-DnaA binds to the origin of replication (oriC) to initiate formation of the DNA replication initiation complex once per cell cycle. Binds the DnaA box (a 9 base pair repeat at the origin) and separates the double-stranded (ds)DNA. Forms a right-handed helical filament on oriC DNA; dsDNA binds to the exterior of the filament while single-stranded (ss)DNA is stabiized in the filament's interior. The ATP-DnaA-oriC complex binds and stabilizes one strand of the AT-rich DNA unwinding element (DUE), permitting loading of DNA polymerase. After initiation quickly degrades to an ADP-DnaA complex that is not apt for DNA replication. Binds acidic phospholipids. The protein is Chromosomal replication initiator protein DnaA of Nitrobacter winogradskyi (strain ATCC 25391 / DSM 10237 / CIP 104748 / NCIMB 11846 / Nb-255).